A 400-amino-acid chain; its full sequence is Outer membrane protein alpha (400 aa).

A signal peptide spans Met1 to Ala20. The SLH domain maps to Phe21–Gly81. Residues Asp85 to Leu379 are a coiled coil. Repeat copies occupy residues Val208–Lys232, Val251–Lys275, and Val326–Lys350. The tract at residues Val208–Lys350 is 3 X 25 AA approximate repeat. The helical transmembrane segment at Ser380–Lys400 threads the bilayer.

In terms of assembly, homotetramer.

The protein resides in the cell outer membrane. Functionally, links the outer membrane to the inner membrane. Long fibrous protein that could serve to separate the two membranes. This chain is Outer membrane protein alpha (omp-alpha), found in Thermotoga maritima (strain ATCC 43589 / DSM 3109 / JCM 10099 / NBRC 100826 / MSB8).